Consider the following 226-residue polypeptide: Ribonuclease 3 (226 aa).

The region spanning Leu7–Asp129 is the RNase III domain. Residue Glu42 coordinates Mg(2+). Residue Asp46 is part of the active site. 2 residues coordinate Mg(2+): Asp115 and Glu118. Residue Glu118 is part of the active site. The DRBM domain maps to Asp156–Gln226.

Belongs to the ribonuclease III family. In terms of assembly, homodimer. Mg(2+) is required as a cofactor.

Its subcellular location is the cytoplasm. The enzyme catalyses Endonucleolytic cleavage to 5'-phosphomonoester.. In terms of biological role, digests double-stranded RNA. Involved in the processing of primary rRNA transcript to yield the immediate precursors to the large and small rRNAs (23S and 16S). Processes some mRNAs, and tRNAs when they are encoded in the rRNA operon. Processes pre-crRNA and tracrRNA of type II CRISPR loci if present in the organism. This chain is Ribonuclease 3, found in Shewanella amazonensis (strain ATCC BAA-1098 / SB2B).